The primary structure comprises 509 residues: ATP synthase subunit alpha (509 aa).

ATP is bound at residue glycine 169 to threonine 176.

Belongs to the ATPase alpha/beta chains family. F-type ATPases have 2 components, CF(1) - the catalytic core - and CF(0) - the membrane proton channel. CF(1) has five subunits: alpha(3), beta(3), gamma(1), delta(1), epsilon(1). CF(0) has three main subunits: a(1), b(2) and c(9-12). The alpha and beta chains form an alternating ring which encloses part of the gamma chain. CF(1) is attached to CF(0) by a central stalk formed by the gamma and epsilon chains, while a peripheral stalk is formed by the delta and b chains.

The protein localises to the cell inner membrane. The catalysed reaction is ATP + H2O + 4 H(+)(in) = ADP + phosphate + 5 H(+)(out). Produces ATP from ADP in the presence of a proton gradient across the membrane. The alpha chain is a regulatory subunit. This chain is ATP synthase subunit alpha, found in Rhizobium johnstonii (strain DSM 114642 / LMG 32736 / 3841) (Rhizobium leguminosarum bv. viciae).